Here is a 183-residue protein sequence, read N- to C-terminus: Adenine phosphoribosyltransferase (183 aa).

This sequence belongs to the purine/pyrimidine phosphoribosyltransferase family. Homodimer.

It is found in the cytoplasm. The catalysed reaction is AMP + diphosphate = 5-phospho-alpha-D-ribose 1-diphosphate + adenine. It functions in the pathway purine metabolism; AMP biosynthesis via salvage pathway; AMP from adenine: step 1/1. Its function is as follows. Catalyzes a salvage reaction resulting in the formation of AMP, that is energically less costly than de novo synthesis. In Salmonella gallinarum (strain 287/91 / NCTC 13346), this protein is Adenine phosphoribosyltransferase.